The chain runs to 402 residues: D-mannonate dehydratase (402 aa).

Substrate is bound by residues N37 and H122. Catalysis depends on Y159, which acts as the Proton donor/acceptor. Mg(2+) is bound at residue D210. The active-site Proton donor/acceptor is the H212. Mg(2+) contacts are provided by E236 and E262. Residues E262, R283, H312, D316, and E339 each contribute to the substrate site.

It belongs to the mandelate racemase/muconate lactonizing enzyme family. GalD subfamily. Homotetramer. It depends on Mg(2+) as a cofactor.

The catalysed reaction is D-mannonate = 2-dehydro-3-deoxy-D-gluconate + H2O. The protein operates within carbohydrate metabolism; pentose and glucuronate interconversion. Catalyzes the dehydration of D-mannonate. Has no detectable activity with a panel of 70 other acid sugars (in vitro). The polypeptide is D-mannonate dehydratase (manD) (Novosphingobium aromaticivorans (strain ATCC 700278 / DSM 12444 / CCUG 56034 / CIP 105152 / NBRC 16084 / F199)).